Here is a 406-residue protein sequence, read N- to C-terminus: CCA-adding enzyme (406 aa).

Residues Gly-32 and Arg-35 each coordinate ATP. The CTP site is built by Gly-32 and Arg-35. Mg(2+)-binding residues include Asp-45 and Asp-47. Positions 116, 159, 162, 165, and 168 each coordinate ATP. CTP contacts are provided by Arg-116, Asp-159, Arg-162, Arg-165, and Arg-168.

This sequence belongs to the tRNA nucleotidyltransferase/poly(A) polymerase family. Bacterial CCA-adding enzyme type 3 subfamily. As to quaternary structure, homodimer. The cofactor is Mg(2+).

The enzyme catalyses a tRNA precursor + 2 CTP + ATP = a tRNA with a 3' CCA end + 3 diphosphate. It carries out the reaction a tRNA with a 3' CCA end + 2 CTP + ATP = a tRNA with a 3' CCACCA end + 3 diphosphate. Its function is as follows. Catalyzes the addition and repair of the essential 3'-terminal CCA sequence in tRNAs without using a nucleic acid template. Adds these three nucleotides in the order of C, C, and A to the tRNA nucleotide-73, using CTP and ATP as substrates and producing inorganic pyrophosphate. tRNA 3'-terminal CCA addition is required both for tRNA processing and repair. Also involved in tRNA surveillance by mediating tandem CCA addition to generate a CCACCA at the 3' terminus of unstable tRNAs. While stable tRNAs receive only 3'-terminal CCA, unstable tRNAs are marked with CCACCA and rapidly degraded. The chain is CCA-adding enzyme from Enterococcus faecalis (strain ATCC 700802 / V583).